The sequence spans 578 residues: Alpha-(1,6)-fucosyltransferase (578 aa).

Over M1 to R9 the chain is Cytoplasmic. A helical; Signal-anchor for type II membrane protein transmembrane segment spans residues W10–V30. Residues R31–K578 are Lumenal-facing. 3 cysteine pairs are disulfide-bonded: C207–C269, C215–C233, and C221–C225. The GT23 domain maps to K209–L496. An SH3-binding motif is present at residues P302–P308. The tract at residues R368–R369 is important for donor substrate binding. C468 and C475 are oxidised to a cystine. The region spanning Q505–E566 is the SH3 domain.

It belongs to the glycosyltransferase 23 family.

Its subcellular location is the golgi apparatus. It is found in the golgi stack membrane. The catalysed reaction is N(4)-{beta-D-GlcNAc-(1-&gt;2)-alpha-D-Man-(1-&gt;3)-[beta-D-GlcNAc-(1-&gt;2)-alpha-D-Man-(1-&gt;6)]-beta-D-Man-(1-&gt;4)-beta-D-GlcNAc-(1-&gt;4)-beta-D-GlcNAc}-L-asparaginyl-[protein] + GDP-beta-L-fucose = an N(4)-{beta-D-GlcNAc-(1-&gt;2)-alpha-D-Man-(1-&gt;3)-[beta-D-GlcNAc-(1-&gt;2)-alpha-D-Man-(1-&gt;6)]-beta-D-Man-(1-&gt;4)-beta-D-GlcNAc-(1-&gt;4)-[alpha-L-Fuc-(1-&gt;6)]-beta-D-GlcNAc}-L-asparaginyl-[protein] + GDP + H(+). Its pathway is protein modification; protein glycosylation. In terms of biological role, catalyzes the addition of fucose in alpha 1-6 linkage to the first GlcNAc residue, next to the peptide chains in N-glycans. The chain is Alpha-(1,6)-fucosyltransferase (fut8) from Xenopus tropicalis (Western clawed frog).